A 119-amino-acid polypeptide reads, in one-letter code: Autophagy-related protein 8 (119 aa).

Glycine 116 carries the Phosphatidylethanolamine amidated glycine lipid modification. A propeptide spans 117-119 (removed in mature form); the sequence is EAL.

It belongs to the ATG8 family. Conjugation to phosphatidylethanolamine (PE) leads to homodimerization. Interacts with ATG1, ATG3, ATG4, ATG7 and ATG12. The C-terminal Glu-117, Ala-118 and Leu-119 residues of ATG8 are removed by ATG4 to expose Gly-116 at the C-terminus. This Gly-116 forms then a thioester bond with ATG7 (E1-like activating enzyme) before being transferred to ATG3 (the specific E2 conjugating enzyme), in order to be finally amidated with phosphatidylethanolamine. This lipid modification anchors ATG8 to membranes and can be reversed by ATG4, releasing soluble ATG8.

The protein localises to the cytoplasmic vesicle. It localises to the cvt vesicle membrane. The protein resides in the autophagosome membrane. It is found in the vacuole membrane. Ubiquitin-like modifier involved in cytoplasm to vacuole transport (Cvt) vesicles and autophagosome formation. With ATG4, mediates the delivery of the vesicles and autophagosomes to the vacuole via the microtubule cytoskeleton. Required for selective autophagic degradation of the nucleus (nucleophagy) as well as for mitophagy which contributes to regulate mitochondrial quantity and quality by eliminating the mitochondria to a basal level to fulfill cellular energy requirements and preventing excess ROS production. Also participates in membrane fusion events that take place in the early secretory pathway. Also involved in endoplasmic reticulum-specific autophagic process and is essential for the survival of cells subjected to severe ER stress. The ATG8-PE conjugate mediates tethering between adjacent membranes and stimulates membrane hemifusion, leading to expansion of the autophagosomal membrane during autophagy. Moreover not only conjugation, but also subsequent ATG8-PE deconjugation is an important step required to facilitate multiple events during macroautophagy, and especially for efficient autophagosome biogenesis, the assembly of ATG9-containing tubulovesicular clusters into phagophores/autophagosomes, and for the disassembly of PAS-associated ATG components. Autophagy is required for conidiation, aerial mycelial growth, and pseudothecia formation, but not for host invasion. The chain is Autophagy-related protein 8 from Cochliobolus heterostrophus (strain C4 / ATCC 48331 / race T) (Southern corn leaf blight fungus).